The chain runs to 1047 residues: Ubiquitin carboxyl-terminal hydrolase 28 (1047 aa).

Disordered stretches follow at residues 60–95 (DQEPVQNTAAAEPSSWEGSAVGKEPPQGGAAFDPEK) and 110–138 (SPKAHAAERPQEVHSPEHKNRSKRKRCEV). One can recognise a UIM domain in the interval 94-113 (EKKGDVHSAVAYGQLESPKA). Residues 111–128 (PKAHAAERPQEVHSPEHK) show a composition bias toward basic and acidic residues. A USP domain is found at 156–651 (VGMKNIGNTC…SAYCLMYISD (496 aa)). The active-site Nucleophile is cysteine 165. Over residues 461-486 (STEDSQMMDRQSQGESLILGTPSQPD) the composition is skewed to polar residues. The disordered stretch occupies residues 461-528 (STEDSQMMDR…SEPPAEMSDC (68 aa)). Residues 489–498 (LDGKDGKPED) show a composition bias toward basic and acidic residues. The segment covering 504–516 (ANSSPQQQLNAPL) has biased composition (polar residues). Histidine 601 (proton acceptor) is an active-site residue. Residues 694-735 (EAEEWEEEQSCKIPSTASESQELSPESGLDPPAAHEQSLRSL) form a disordered region. Over residues 705-717 (KIPSTASESQELS) the composition is skewed to polar residues.

Belongs to the peptidase C19 family. USP28 subfamily.

It is found in the nucleus. The protein resides in the nucleoplasm. It catalyses the reaction Thiol-dependent hydrolysis of ester, thioester, amide, peptide and isopeptide bonds formed by the C-terminal Gly of ubiquitin (a 76-residue protein attached to proteins as an intracellular targeting signal).. Functionally, deubiquitinase involved in DNA damage response checkpoint and MYC proto-oncogene stability. Involved in DNA damage induced apoptosis by specifically deubiquitinating proteins of the DNA damage pathway such as CLSPN. Also involved in G2 DNA damage checkpoint, by deubiquitinating CLSPN, and preventing its degradation by the anaphase promoting complex/cyclosome (APC/C). Specifically deubiquitinates MYC in the nucleoplasm, leading to prevent MYC degradation by the proteasome. Deubiquitinates ZNF304, hence may prevent ZNF304 degradation by the proteasome, leading to the activated KRAS-mediated promoter hypermethylation and transcriptional silencing of tumor suppressor genes (TSGs). The protein is Ubiquitin carboxyl-terminal hydrolase 28 (USP28) of Gallus gallus (Chicken).